A 353-amino-acid polypeptide reads, in one-letter code: Photosystem II protein D1 (353 aa).

The residue at position 2 (Thr-2) is an N-acetylthreonine. Thr-2 is subject to Phosphothreonine. A run of 3 helical transmembrane segments spans residues 29-46 (YIGW…TATS), 118-133 (HFFL…EWEL), and 142-156 (WIAV…AATA). A chlorophyll a-binding site is contributed by His-118. Residue Tyr-126 participates in pheophytin a binding. Residues Asp-170 and Glu-189 each coordinate [CaMn4O5] cluster. The helical transmembrane segment at 197–218 (FHMLGVAGVFGGSLFSAMHGSL) threads the bilayer. His-198 contacts chlorophyll a. A quinone is bound by residues His-215 and 264 to 265 (SF). His-215 lines the Fe cation pocket. Residue His-272 coordinates Fe cation. A helical transmembrane segment spans residues 274–288 (FLAAWPVVGIWFTAL). [CaMn4O5] cluster-binding residues include His-332, Glu-333, Asp-342, and Ala-344. The propeptide occupies 345–353 (SVEAPSVNA).

This sequence belongs to the reaction center PufL/M/PsbA/D family. As to quaternary structure, PSII is composed of 1 copy each of membrane proteins PsbA, PsbB, PsbC, PsbD, PsbE, PsbF, PsbH, PsbI, PsbJ, PsbK, PsbL, PsbM, PsbT, PsbX, PsbY, PsbZ, Psb30/Ycf12, at least 3 peripheral proteins of the oxygen-evolving complex and a large number of cofactors. It forms dimeric complexes. It depends on The D1/D2 heterodimer binds P680, chlorophylls that are the primary electron donor of PSII, and subsequent electron acceptors. It shares a non-heme iron and each subunit binds pheophytin, quinone, additional chlorophylls, carotenoids and lipids. D1 provides most of the ligands for the Mn4-Ca-O5 cluster of the oxygen-evolving complex (OEC). There is also a Cl(-1) ion associated with D1 and D2, which is required for oxygen evolution. The PSII complex binds additional chlorophylls, carotenoids and specific lipids. as a cofactor. In terms of processing, the 9 C-terminal residues are removed, probably by CTPA (AC O04073); processing is essential to allow assembly of the oxygen-evolving complex and thus photosynthetic growth. Tyr-161 forms a radical intermediate that is referred to as redox-active TyrZ, YZ or Y-Z.

Its subcellular location is the plastid. The protein localises to the chloroplast thylakoid membrane. It carries out the reaction 2 a plastoquinone + 4 hnu + 2 H2O = 2 a plastoquinol + O2. Its function is as follows. Photosystem II (PSII) is a light-driven water:plastoquinone oxidoreductase that uses light energy to abstract electrons from H(2)O, generating O(2) and a proton gradient subsequently used for ATP formation. It consists of a core antenna complex that captures photons, and an electron transfer chain that converts photonic excitation into a charge separation. The D1/D2 (PsbA/PsbD) reaction center heterodimer binds P680, the primary electron donor of PSII as well as several subsequent electron acceptors. In Tetradesmus obliquus (Green alga), this protein is Photosystem II protein D1.